The following is a 515-amino-acid chain: Proline--tRNA ligase (515 aa).

This sequence belongs to the class-II aminoacyl-tRNA synthetase family. ProS type 3 subfamily. In terms of assembly, homodimer.

Its subcellular location is the cytoplasm. The catalysed reaction is tRNA(Pro) + L-proline + ATP = L-prolyl-tRNA(Pro) + AMP + diphosphate. Its function is as follows. Catalyzes the attachment of proline to tRNA(Pro) in a two-step reaction: proline is first activated by ATP to form Pro-AMP and then transferred to the acceptor end of tRNA(Pro). This is Proline--tRNA ligase from Novosphingobium aromaticivorans (strain ATCC 700278 / DSM 12444 / CCUG 56034 / CIP 105152 / NBRC 16084 / F199).